Reading from the N-terminus, the 83-residue chain is Cell division topological specificity factor (83 aa).

It belongs to the MinE family.

In terms of biological role, prevents the cell division inhibition by proteins MinC and MinD at internal division sites while permitting inhibition at polar sites. This ensures cell division at the proper site by restricting the formation of a division septum at the midpoint of the long axis of the cell. In Alcanivorax borkumensis (strain ATCC 700651 / DSM 11573 / NCIMB 13689 / SK2), this protein is Cell division topological specificity factor.